Reading from the N-terminus, the 517-residue chain is Crotonobetaine/carnitine--CoA ligase (517 aa).

It belongs to the ATP-dependent AMP-binding enzyme family.

The enzyme catalyses 4-(trimethylamino)butanoate + ATP + CoA = 4-(trimethylamino)butanoyl-CoA + AMP + diphosphate. The catalysed reaction is crotonobetaine + ATP + CoA = crotonobetainyl-CoA + AMP + diphosphate. It carries out the reaction (R)-carnitine + ATP + CoA = (R)-carnitinyl-CoA + AMP + diphosphate. It functions in the pathway amine and polyamine metabolism; carnitine metabolism. Its function is as follows. Catalyzes the transfer of CoA to carnitine, generating the initial carnitinyl-CoA needed for the CaiB reaction cycle. Also has activity toward crotonobetaine and gamma-butyrobetaine. In Salmonella paratyphi B (strain ATCC BAA-1250 / SPB7), this protein is Crotonobetaine/carnitine--CoA ligase.